Consider the following 138-residue polypeptide: Translation initiation factor 2 subunit beta (138 aa).

This sequence belongs to the eIF-2-beta/eIF-5 family. In terms of assembly, heterotrimer composed of an alpha, a beta and a gamma chain.

EIF-2 functions in the early steps of protein synthesis by forming a ternary complex with GTP and initiator tRNA. The chain is Translation initiation factor 2 subunit beta from Methanococcus maripaludis (strain C5 / ATCC BAA-1333).